Reading from the N-terminus, the 312-residue chain is Aspartate carbamoyltransferase catalytic subunit (312 aa).

Residues Arg-58 and Thr-59 each contribute to the carbamoyl phosphate site. Lys-86 is a binding site for L-aspartate. Carbamoyl phosphate is bound by residues Arg-108, His-136, and Gln-139. Residues Arg-169 and Arg-223 each contribute to the L-aspartate site. Carbamoyl phosphate contacts are provided by Gly-264 and Pro-265.

This sequence belongs to the aspartate/ornithine carbamoyltransferase superfamily. ATCase family. Heterododecamer (2C3:3R2) of six catalytic PyrB chains organized as two trimers (C3), and six regulatory PyrI chains organized as three dimers (R2).

It carries out the reaction carbamoyl phosphate + L-aspartate = N-carbamoyl-L-aspartate + phosphate + H(+). The protein operates within pyrimidine metabolism; UMP biosynthesis via de novo pathway; (S)-dihydroorotate from bicarbonate: step 2/3. Catalyzes the condensation of carbamoyl phosphate and aspartate to form carbamoyl aspartate and inorganic phosphate, the committed step in the de novo pyrimidine nucleotide biosynthesis pathway. In Desulforamulus reducens (strain ATCC BAA-1160 / DSM 100696 / MI-1) (Desulfotomaculum reducens), this protein is Aspartate carbamoyltransferase catalytic subunit.